The sequence spans 202 residues: UPF0301 protein BCG_0069 (202 aa).

It belongs to the UPF0301 (AlgH) family.

The sequence is that of UPF0301 protein BCG_0069 from Mycobacterium bovis (strain BCG / Pasteur 1173P2).